A 726-amino-acid polypeptide reads, in one-letter code: Penicillin-binding protein 1A (726 aa).

Over 1–3 the chain is Cytoplasmic; sequence MKK. A helical; Signal-anchor for type II membrane protein transmembrane segment spans residues 4–24; sequence LVIGILGIVIALFVGLLVFLI. Over 25–726 the chain is Periplasmic; it reads PIYKNLPDPK…SDLNAILGLR (702 aa). Positions 45 to 213 are transglycosylase; it reads SEVYDAKGRL…AKYNPFYHPE (169 aa). Glu83 acts as the Proton donor; for transglycosylase activity in catalysis. The tract at residues 379–662 is transpeptidase; it reads KYLGGNRAEI…SRVALPIWID (284 aa). Ser432 functions as the Acyl-ester intermediate; for transpeptidase activity in the catalytic mechanism.

This sequence in the N-terminal section; belongs to the glycosyltransferase 51 family. The protein in the C-terminal section; belongs to the transpeptidase family.

The protein localises to the cell inner membrane. It catalyses the reaction [GlcNAc-(1-&gt;4)-Mur2Ac(oyl-L-Ala-gamma-D-Glu-L-Lys-D-Ala-D-Ala)](n)-di-trans,octa-cis-undecaprenyl diphosphate + beta-D-GlcNAc-(1-&gt;4)-Mur2Ac(oyl-L-Ala-gamma-D-Glu-L-Lys-D-Ala-D-Ala)-di-trans,octa-cis-undecaprenyl diphosphate = [GlcNAc-(1-&gt;4)-Mur2Ac(oyl-L-Ala-gamma-D-Glu-L-Lys-D-Ala-D-Ala)](n+1)-di-trans,octa-cis-undecaprenyl diphosphate + di-trans,octa-cis-undecaprenyl diphosphate + H(+). The enzyme catalyses Preferential cleavage: (Ac)2-L-Lys-D-Ala-|-D-Ala. Also transpeptidation of peptidyl-alanyl moieties that are N-acyl substituents of D-alanine.. It participates in cell wall biogenesis; peptidoglycan biosynthesis. The protein is Penicillin-binding protein 1A (mrcA) of Aquifex aeolicus (strain VF5).